The following is a 652-amino-acid chain: Cleavage and polyadenylation specificity factor subunit 6 (652 aa).

Residues 20–85 are disordered; that stretch reads QAQDEFGGDG…GVYHQSSGSL (66 aa). The 81-residue stretch at 93–173 folds into the RRM domain; the sequence is YQLYVGNLTW…QAPVVTYPSK (81 aa). Disordered regions lie at residues 184-440 and 518-652; these read KTRP…QQMG and SYNR…RSRH. A compositionally biased stretch (pro residues) spans 187 to 203; the sequence is PVPPPQQNGPPRGPAPP. Residues 205-223 show a composition bias toward gly residues; that stretch reads MGGGPMPTGHPGGPQGGGP. 3 stretches are compositionally biased toward pro residues: residues 256 to 266, 295 to 307, and 338 to 352; these read SGPPRMQPPMH, GPRPGPPNGPPQR, and PQGPPRGLPPAPGPG. Residues 391–406 are compositionally biased toward low complexity; the sequence is PGMNMPPQQGMNMTPQ. Over residues 420 to 435 the composition is skewed to pro residues; sequence GPWPPPQGKPPGPFPD. Over residues 518-528 the composition is skewed to basic and acidic residues; that stretch reads SYNRRERSRSR. A compositionally biased stretch (basic residues) spans 529–538; sequence ERSHRSRQRR. Positions 539–590 are enriched in basic and acidic residues; that stretch reads ERSTSRYRERSRERERDRDRERERDGGSYRERSRSRERERQAPDHYRDDSRS. Phosphoserine is present on Ser596. Residues 598–610 are compositionally biased toward low complexity; the sequence is EPVVAEAAEAPSS. The span at 612-652 shows a compositional bias: basic and acidic residues; that stretch reads RYYEDRERYRSSDRERRDRDRDRDRERERDRDRREEHRSRH.

It belongs to the RRM CPSF6/7 family.

Its subcellular location is the nucleus. Functionally, may play a role in pre-mRNA 3'-processing. The polypeptide is Cleavage and polyadenylation specificity factor subunit 6 (Drosophila melanogaster (Fruit fly)).